The sequence spans 74 residues: Protein SlyX homolog (74 aa).

The tract at residues 54 to 74 is disordered; that stretch reads QDRNPDAQEPYSLRDEIPPHY.

It belongs to the SlyX family.

In Neisseria gonorrhoeae (strain ATCC 700825 / FA 1090), this protein is Protein SlyX homolog.